The primary structure comprises 407 residues: MVIILKKTLEKKGADDVIASRANLGPFQAQTMSQGAALFSCGLMETSRWHDSCSIRQRPVGTSLESLWDVLPEVHSGSAQWDWDVGSASSTLTSLLQDLSLTESSSHSTAPPSKKQCRSLSCSDELGGCRSTWRPQGSRVWTTVEKRRCHSGGSVQRSSGGNLQLGFPAMQRSFSFSLPARSNAVEPPSFTQRLPYAFTSLTHSSSMPLASDPPAQPLSLSNEQICFPEPHGPSPSSSPDSTPELERRSGQGGLARSRSQPCELNEKKIGVKRRRPDDTHKQRPSLDLAKMTQKLHSFHSLSCPGITGEETCESEATPPPRSVQQRDAVDSPAHEHNLKDFQPQEGDFNGNKSSDPITEEVDWNCDDGTPETSNGKDTEPLWVGLCSMKRDVYQLGGELDIEQIERN.

Disordered stretches follow at residues 204–286 (SSSM…RPSL) and 306–380 (ITGE…DTEP). Basic and acidic residues-rich tracts occupy residues 264 to 281 (LNEK…DTHK) and 327 to 339 (DAVD…HNLK). Positions 272–275 (KRRR) match the Nuclear localization signal motif. Acidic residues predominate over residues 357 to 369 (ITEEVDWNCDDGT).

Belongs to the FAM53 family. As to quaternary structure, interacts with ctnnb1. Predominantly expressed in proliferating cells throughout embryonic development.

The protein localises to the nucleus. Its function is as follows. Acts as a regulator of Wnt signaling pathway by regulating beta-catenin (ctnnb1) nuclear localization. In Oryzias latipes (Japanese rice fish), this protein is Protein FAM53B.